A 603-amino-acid polypeptide reads, in one-letter code: Myotubularin (603 aa).

A phosphoserine mark is found at serine 13 and serine 18. In terms of domain architecture, GRAM spans 29-97 (QDVSETVPRL…GVISRIEKMG (69 aa)). In terms of domain architecture, Myotubularin phosphatase spans 163 to 538 (GWTVYNPVEE…RHLELWVNYY (376 aa)). Residues asparagine 288, asparagine 313, and isoleucine 314 each contribute to the a 1,2-diacyl-sn-glycero-3-phospho-(1D-myo-inositol-3,5-bisphosphate) site. Residues asparagine 288, asparagine 313, and isoleucine 314 each contribute to the a 1,2-diacyl-sn-glycero-3-phospho-(1D-myo-inositol-3-phosphate) site. Cysteine 375 serves as the catalytic Phosphocysteine intermediate. Positions 376, 377, 378, 379, 380, 381, 417, and 421 each coordinate a 1,2-diacyl-sn-glycero-3-phospho-(1D-myo-inositol-3,5-bisphosphate). Positions 376, 377, 378, 379, 380, and 381 each coordinate a 1,2-diacyl-sn-glycero-3-phospho-(1D-myo-inositol-3-phosphate). Arginine 421 contributes to the a 1,2-diacyl-sn-glycero-3-phospho-(1D-myo-inositol-3-phosphate) binding site. Threonine 495 carries the phosphothreonine modification. Residue serine 588 is modified to Phosphoserine.

It belongs to the protein-tyrosine phosphatase family. Non-receptor class myotubularin subfamily. As to quaternary structure, heterodimer with MTMR12. Interacts with KMT2A/MLL1 (via SET domain). Interacts with DES in skeletal muscle but not in cardiac muscle. Interacts with SPEG. In terms of tissue distribution, widely expressed with highest levels detected in heart and muscle and low levels in brain (at protein level). Expressed in skeletal muscles (at protein level).

Its subcellular location is the cytoplasm. The protein resides in the cell membrane. The protein localises to the cell projection. It localises to the filopodium. It is found in the ruffle. Its subcellular location is the late endosome. The protein resides in the myofibril. The protein localises to the sarcomere. It catalyses the reaction a 1,2-diacyl-sn-glycero-3-phospho-(1D-myo-inositol-3-phosphate) + H2O = a 1,2-diacyl-sn-glycero-3-phospho-(1D-myo-inositol) + phosphate. The catalysed reaction is a 1,2-diacyl-sn-glycero-3-phospho-(1D-myo-inositol-3,5-bisphosphate) + H2O = a 1,2-diacyl-sn-glycero-3-phospho-(1D-myo-inositol-5-phosphate) + phosphate. The enzyme catalyses 1,2-dioctanoyl-sn-glycero-3-phospho-(1-D-myo-inositol-3-phosphate) + H2O = 1,2-dioctanoyl-sn-glycero-3-phospho-(1D-myo-inositol) + phosphate. It carries out the reaction 1,2-dioctanoyl-sn-glycero-3-phospho-(1D-myo-inositol-3,5-bisphosphate) + H2O = 1,2-dioctanoyl-sn-glycero-3-phospho-(1D-myo-inositol-5-phosphate) + phosphate. It catalyses the reaction 1,2-dihexadecanoyl-sn-glycero-3-phospho-(1D-myo-inositol-3,5-phosphate) + H2O = 1,2-dihexadecanoyl-sn-glycero-3-phospho-(1D-myo-inositol-5-phosphate) + phosphate. With respect to regulation, allosterically activated by phosphatidylinositol 5-phosphate (PI5P). Lipid phosphatase which dephosphorylates phosphatidylinositol 3-monophosphate (PI3P) and phosphatidylinositol 3,5-bisphosphate (PI(3,5)P2). Has also been shown to dephosphorylate phosphotyrosine- and phosphoserine-containing peptides. Negatively regulates EGFR degradation through regulation of EGFR trafficking from the late endosome to the lysosome. Plays a role in vacuolar formation and morphology. Regulates desmin intermediate filament assembly and architecture. Plays a role in mitochondrial morphology and positioning. Required for skeletal muscle maintenance but not for myogenesis. In skeletal muscles, stabilizes MTMR12 protein levels. The chain is Myotubularin from Mus musculus (Mouse).